We begin with the raw amino-acid sequence, 217 residues long: Putative N-acetylmuramoyl-L-alanine amidase (217 aa).

The MurNAc-LAA domain maps to 3–206 (IAIDAGHGGQ…ISKSISIALK (204 aa)).

This sequence belongs to the N-acetylmuramoyl-L-alanine amidase 3 family.

It is found in the secreted. It carries out the reaction Hydrolyzes the link between N-acetylmuramoyl residues and L-amino acid residues in certain cell-wall glycopeptides.. Cell-wall hydrolase involved in septum cleavage during cell division. The sequence is that of Putative N-acetylmuramoyl-L-alanine amidase (amiB) from Buchnera aphidicola subsp. Baizongia pistaciae (strain Bp).